We begin with the raw amino-acid sequence, 371 residues long: 2-oxoadipate dioxygenase/decarboxylase, chloroplastic (371 aa).

Residues 1-50 (MISLHSSAIKASLYGSFPSSLRSTLSVSFSAGSLIRLPSVGKRNLSVVVS) constitute a chloroplast transit peptide. Residues H113 and R117 each coordinate 2-oxoadipate. H113 lines the Fe(2+) pocket. H250 serves as a coordination point for Fe(2+). Residues Q296 and Y320 each coordinate 2-oxoadipate. E322 serves as a coordination point for Fe(2+).

Belongs to the 2-oxoadipate dioxygenase/decarboxylase family. Fe(2+) serves as cofactor.

The protein resides in the plastid. It is found in the chloroplast. The catalysed reaction is 2-oxoadipate + O2 = (R)-2-hydroxyglutarate + CO2. The protein operates within amino-acid degradation. Catalyzes the decarboxylation and hydroxylation of 2-oxoadipate (2OA) to form D-2-hydroxyglutarate (D-2-HGA). Is involved in a D-lysine catabolic pathway. The sequence is that of 2-oxoadipate dioxygenase/decarboxylase, chloroplastic from Arabidopsis thaliana (Mouse-ear cress).